A 152-amino-acid polypeptide reads, in one-letter code: Calmodulin (152 aa).

At Ala-2 the chain carries N-acetylalanine. EF-hand domains follow at residues 10–45 (EQIA…LGQN), 46–81 (PTEA…KMQD), 83–118 (DTEE…LGEK), and 119–152 (LTNE…IVRN). Positions 23, 25, 27, 29, 34, 59, 61, 63, 65, 70, 96, 98, 100, 102, 107, 132, 134, 136, 138, and 143 each coordinate Ca(2+).

It belongs to the calmodulin family. Interacts with cmbB, numA/nucleomorphin, pgkA/phosphoglycerate kinase, and thyB/thymidine kinase in the presence of Ca(2+). Interacts with dwwA in the absence of Ca(2+). In terms of processing, the N-terminus is blocked. Trimethylation of Lys-118 observed in other calmodulins is absent here.

It is found in the contractile vacuole. Functionally, calmodulin mediates the control of a large number of enzymes, ion channels and other proteins by Ca(2+). Among the enzymes to be stimulated by the calmodulin-Ca(2+) complex are a number of protein kinases and phosphatases. This chain is Calmodulin (calA), found in Dictyostelium discoideum (Social amoeba).